A 171-amino-acid chain; its full sequence is Small ribosomal subunit protein uS4 (171 aa).

The region spanning 104-168 (RRLQTIVYKK…SPFKERAEEA (65 aa)) is the S4 RNA-binding domain.

The protein belongs to the universal ribosomal protein uS4 family. Part of the 30S ribosomal subunit. Contacts protein S5. The interaction surface between S4 and S5 is involved in control of translational fidelity.

Functionally, one of the primary rRNA binding proteins, it binds directly to 16S rRNA where it nucleates assembly of the body of the 30S subunit. In terms of biological role, with S5 and S12 plays an important role in translational accuracy. The protein is Small ribosomal subunit protein uS4 of Aeropyrum pernix (strain ATCC 700893 / DSM 11879 / JCM 9820 / NBRC 100138 / K1).